The chain runs to 741 residues: Moderate conductance mechanosensitive channel YbiO (741 aa).

The N-terminal stretch at 1 to 18 (MRWILFILFCLLGAPAHA) is a signal peptide. The tract at residues 22-42 (PGVTTTTTTDSTTEPAPEPDI) is disordered. Residues 25 to 34 (TTTTTTDSTT) show a composition bias toward low complexity. Helical transmembrane passes span 143–163 (MLAV…LPLY), 185–205 (AMII…LFVG), 225–245 (LFLN…LIFC), 268–288 (LSWL…IISN), 294–314 (IGAL…LYLI), 343–363 (FALV…FFSL), 372–392 (FMMG…FVSG), 432–452 (ILTV…FDFW), 466–486 (ILIR…VLAS), 509–529 (LLTL…IMIV), and 533–553 (IGVN…AISF).

It belongs to the MscS (TC 1.A.23) family. Homoheptamer.

Its subcellular location is the cell inner membrane. Mechanosensitive channel that protects cells against hypoosmotic stress when highly overexpressed. This is Moderate conductance mechanosensitive channel YbiO (ybiO) from Escherichia coli (strain K12).